A 424-amino-acid polypeptide reads, in one-letter code: Serine--tRNA ligase (424 aa).

Position 231-233 (231-233) interacts with L-serine; sequence TAE. Residue 262–264 participates in ATP binding; the sequence is RSE. E285 serves as a coordination point for L-serine. 349 to 352 is a binding site for ATP; it reads EISS. S385 contributes to the L-serine binding site.

This sequence belongs to the class-II aminoacyl-tRNA synthetase family. Type-1 seryl-tRNA synthetase subfamily. Homodimer. The tRNA molecule binds across the dimer.

The protein resides in the cytoplasm. The enzyme catalyses tRNA(Ser) + L-serine + ATP = L-seryl-tRNA(Ser) + AMP + diphosphate + H(+). The catalysed reaction is tRNA(Sec) + L-serine + ATP = L-seryl-tRNA(Sec) + AMP + diphosphate + H(+). It functions in the pathway aminoacyl-tRNA biosynthesis; selenocysteinyl-tRNA(Sec) biosynthesis; L-seryl-tRNA(Sec) from L-serine and tRNA(Sec): step 1/1. Functionally, catalyzes the attachment of serine to tRNA(Ser). Is also able to aminoacylate tRNA(Sec) with serine, to form the misacylated tRNA L-seryl-tRNA(Sec), which will be further converted into selenocysteinyl-tRNA(Sec). This Bacillus cereus (strain ATCC 10987 / NRS 248) protein is Serine--tRNA ligase.